We begin with the raw amino-acid sequence, 149 residues long: Large ribosomal subunit protein uL15 (149 aa).

The span at 1–28 (MVIKIHDLRPAPGSKRDKIRVGRGEGSK) shows a compositional bias: basic and acidic residues. The interval 1–54 (MVIKIHDLRPAPGSKRDKIRVGRGEGSKGKTAGRGTKGTKARKNVSPRFEGGQM) is disordered.

This sequence belongs to the universal ribosomal protein uL15 family. In terms of assembly, part of the 50S ribosomal subunit.

Binds to the 23S rRNA. The sequence is that of Large ribosomal subunit protein uL15 from Saccharopolyspora erythraea (strain ATCC 11635 / DSM 40517 / JCM 4748 / NBRC 13426 / NCIMB 8594 / NRRL 2338).